The chain runs to 225 residues: Cytidylate kinase (225 aa).

Position 12–20 (12–20) interacts with ATP; that stretch reads GPSGAGKGT.

It belongs to the cytidylate kinase family. Type 1 subfamily.

The protein resides in the cytoplasm. It carries out the reaction CMP + ATP = CDP + ADP. The enzyme catalyses dCMP + ATP = dCDP + ADP. This Proteus mirabilis (strain HI4320) protein is Cytidylate kinase.